The following is a 385-amino-acid chain: MKLVRKDLEKDNAGQVTLIPEEPEDMWHTYNLLQVGDSLRASTIRKVQTESSTGSVGSNRIRTTLTLCVEAIDFDSQACQLRVKGTNIQENEYVKMGAYHTIELEPNRQFTLAKKQWDSVVLERIEQACDPAWNADVAAVVMQEGLAHVCLVTPSMTLTRAKVEVNIPRKRKGNCSQHDRALERFYEQVVQAIQRHINFEVVKCVLVASPGFVREQFCDYMFQQAVKTDNKLLLENRSKFLQVHSSSGHKYVLKEALCDPAVTSRLSDTKAAGEVKALDDFYKMLQHEPDRAFYGLKHVEKANEAMAIDTLLISDELFRHQDVATRARYVKLVDSVRENMGTVRIFSSLHVSGEQLGQLTGVAAILRFPVAELSDQEDESSSEED.

The protein belongs to the eukaryotic release factor 1 family. Pelota subfamily. In terms of assembly, component of the Pelota-HBS1L complex, also named Dom34-Hbs1 complex, composed of PELO and HBS1L. It depends on a divalent metal cation as a cofactor.

The protein localises to the cytoplasm. Its function is as follows. Component of the Pelota-HBS1L complex, a complex that recognizes stalled ribosomes and triggers the No-Go Decay (NGD) pathway. In the Pelota-HBS1L complex, PELO recognizes ribosomes stalled at the 3' end of an mRNA and engages stalled ribosomes by destabilizing mRNA in the mRNA channel. Following mRNA extraction from stalled ribosomes by the SKI complex, the Pelota-HBS1L complex promotes recruitment of ABCE1, which drives the disassembly of stalled ribosomes, followed by degradation of damaged mRNAs as part of the NGD pathway. The protein is Protein pelota homolog (PELO) of Gallus gallus (Chicken).